We begin with the raw amino-acid sequence, 249 residues long: uncharacterized protein (249 aa).

Residues 1-25 (MRYLNTKNIIAAGVLLSCMSSIAWG) form the signal peptide.

The protein belongs to the periplasmic pilus chaperone family.

It is found in the periplasm. Functionally, could be required for the biogenesis of a putative fimbria. This is an uncharacterized protein from Escherichia coli (strain K12).